Reading from the N-terminus, the 286-residue chain is Deleted in azoospermia-like-A (286 aa).

Residues 33-114 form the RRM domain; it reads NTVFVGGIDI…PAIRKICTYV (82 aa). The region spanning 155–180 is the DAZ domain; that stretch reads ACPYPSSPPMAIQQIPVGCQQPGYFQ.

The protein belongs to the RRM DAZ family. In terms of assembly, interacts with the C-terminus of pabp1 and with epabp. Prior to oocyte maturation, found in a complex with epabp and pum2 proteins and spdy1 mRNA; pum2 dissociates from the complex during maturation. In terms of tissue distribution, germ-line specific. Oocyte mRNA expression is first restricted to the granulo-fibrillar material (GFM) of the mitochondrial cloud and then to the oocyte germ plasm at the vegetal cortex. Remains an mRNA component of the germ plasm until the neurula stage. In 2-8 cell embryos, expressed in the germ plasm matrix between germinal granules and mitochondria. Expressed in primordial germ cells (PGCs) later in embryogenesis. In addition to the ovaries of adult females, expressed in the testis of adult and juvenile males in spermatogonia and spermatocytes. The protein is restricted to the embryonic germ plasm and primordial germ cells.

The protein resides in the cytoplasm. In terms of biological role, RNA-binding protein that is required for primordial germ cell (PGC) differentiation and indirectly necessary for the migration of PGCs through the endoderm. May promote meiotic cell division during spermatogenesis. Shows a preference for G- and U-rich RNAs and probably binds the 3'-UTR of target mRNAs. Stimulates the initiation of translation of mRNAs through the recruitment of poly(A)-binding proteins (PABPs). This Xenopus laevis (African clawed frog) protein is Deleted in azoospermia-like-A (dazl-a).